We begin with the raw amino-acid sequence, 133 residues long: Sec-independent protein translocase protein TatB (133 aa).

The chain crosses the membrane as a helical span at residues 1-21 (MFDIGFWELVLIAIVALVVLG). Residues 67-133 (EQMGMQNLSP…ASQPAEKKAE (67 aa)) form a disordered region. Polar residues predominate over residues 70–84 (GMQNLSPELQKSVES). The segment covering 97–116 (AATPSSEASSTSSNPSSATE) has biased composition (low complexity).

The protein belongs to the TatB family. As to quaternary structure, the Tat system comprises two distinct complexes: a TatABC complex, containing multiple copies of TatA, TatB and TatC subunits, and a separate TatA complex, containing only TatA subunits. Substrates initially bind to the TatABC complex, which probably triggers association of the separate TatA complex to form the active translocon.

Its subcellular location is the cell inner membrane. Functionally, part of the twin-arginine translocation (Tat) system that transports large folded proteins containing a characteristic twin-arginine motif in their signal peptide across membranes. Together with TatC, TatB is part of a receptor directly interacting with Tat signal peptides. TatB may form an oligomeric binding site that transiently accommodates folded Tat precursor proteins before their translocation. In Vibrio cholerae serotype O1 (strain ATCC 39315 / El Tor Inaba N16961), this protein is Sec-independent protein translocase protein TatB.